A 322-amino-acid chain; its full sequence is Eukaryotic translation initiation factor 3 subunit I (322 aa).

WD repeat units lie at residues 4-43, 46-85, 141-180, 184-223, and 281-322; these read GHERSITQIKYNREGDLLFSCSKDQKPNVWYSLNGERLGT, GHQGAVWCLDVDWETRKLITGAGDMTTKIWDVEYGTVIAS, MVESKITSMLWGPLDETIITGHDNGNIAIWDIRKGQKVVD, DHTAGINDMQLSKDGTMFVTASKDTTAKLFDSESLMCLKT, and GHFG…NIFE.

This sequence belongs to the eIF-3 subunit I family. As to quaternary structure, component of the eukaryotic translation initiation factor 3 (eIF-3) complex. The eIF-3 complex interacts with pix.

It localises to the cytoplasm. In terms of biological role, component of the eukaryotic translation initiation factor 3 (eIF-3) complex, which is involved in protein synthesis of a specialized repertoire of mRNAs and, together with other initiation factors, stimulates binding of mRNA and methionyl-tRNAi to the 40S ribosome. The eIF-3 complex specifically targets and initiates translation of a subset of mRNAs involved in cell proliferation. The polypeptide is Eukaryotic translation initiation factor 3 subunit I (Drosophila mojavensis (Fruit fly)).